The sequence spans 327 residues: L-lactate dehydrogenase (327 aa).

NAD(+) is bound by residues Val-18, Asp-39, Lys-44, Tyr-69, and Gly-83 to Ala-84. Substrate contacts are provided by residues Gln-86, Arg-92, and Asn-124–Asp-127. Residues Ala-122–Asn-124 and Ser-147 each bind NAD(+). Position 152 to 155 (Asp-152 to Arg-155) interacts with substrate. Positions 157 and 172 each coordinate beta-D-fructose 1,6-bisphosphate. The Proton acceptor role is filled by His-179. Tyr-224 is modified (phosphotyrosine). Thr-233 serves as a coordination point for substrate.

It belongs to the LDH/MDH superfamily. LDH family. In terms of assembly, homotetramer.

It is found in the cytoplasm. It carries out the reaction (S)-lactate + NAD(+) = pyruvate + NADH + H(+). It functions in the pathway fermentation; pyruvate fermentation to lactate; (S)-lactate from pyruvate: step 1/1. Allosterically activated by fructose 1,6-bisphosphate (FBP). Its function is as follows. Catalyzes the conversion of lactate to pyruvate. This Streptococcus equi subsp. zooepidemicus (strain H70) protein is L-lactate dehydrogenase.